The sequence spans 385 residues: Glucans biosynthesis protein C (385 aa).

10 helical membrane-spanning segments follow: residues 17–39 (AWLM…TWHV), 54–76 (FIHS…MLFL), 88–110 (VERV…FIML), 136–158 (LISH…WIFK), 179–198 (LSVI…RTIF), 213–235 (IVMQ…IFPH), 242–261 (TPSR…YLLN), 276–295 (SVIT…SFGH), 308–330 (FVNA…GAYI), and 334–356 (ITSN…IILY).

The protein belongs to the acyltransferase 3 family. OpgC subfamily.

The protein resides in the cell membrane. The protein operates within glycan metabolism; osmoregulated periplasmic glucan (OPG) biosynthesis. Functionally, necessary for the succinyl substitution of periplasmic glucans. Could catalyze the transfer of succinyl residues from the cytoplasmic side of the membrane to the nascent glucan backbones on the periplasmic side of the membrane. This is Glucans biosynthesis protein C from Escherichia coli O157:H7.